The sequence spans 323 residues: Magnesium transporter NIPA1 (323 aa).

The Extracellular segment spans residues 1-21 (MGTAAAAAAAGEGARGPSPAA). Residues 22–42 (VSLGLGVAVVSSLVNGSTFVL) form a helical membrane-spanning segment. At 43–60 (QKKGIVRAKRRGTSYLTD) the chain is on the cytoplasmic side. Residues 61 to 81 (IVWWAGTIAMAVGQIGNFLAY) form a helical membrane-spanning segment. Position 82 (T82) is a topological domain, extracellular. The chain crosses the membrane as a helical span at residues 83 to 103 (AVPTVLVTPLGALGVPFGSIL). The Cytoplasmic segment spans residues 104–111 (ASYLLKEK). A helical transmembrane segment spans residues 112–132 (LNILGKLGCLLSCAGSVVLII). Residues 133-153 (HSPKSESVTTQAELEEKLTNP) are Extracellular-facing. The helical transmembrane segment at 154-174 (VFVGYLCIVLLMLLLLIFWIA) threads the bilayer. Over 175–177 (PAH) the chain is Cytoplasmic. The helical transmembrane segment at 178–198 (GPTNIMVYISICSLLGSFTVP) threads the bilayer. At 199–218 (STKGIGLAAQDILHNNPSSQ) the chain is on the extracellular side. Residues 219–239 (RALCLCLVLLAVLGCSIIVQF) form a helical membrane-spanning segment. At 240-253 (RYINKALECFDSSV) the chain is on the cytoplasmic side. Residues 254 to 274 (FGAIYYVVFTTLVLLASAILF) traverse the membrane as a helical segment. Residues 275–284 (REWSNVGLVD) lie on the Extracellular side of the membrane. Residues 285–305 (FLGMACGFTTVSVGIVLIQVF) form a helical membrane-spanning segment. The Cytoplasmic portion of the chain corresponds to 306–323 (KEFNFNLGEMNKSNMKTD).

Belongs to the NIPA family. In terms of assembly, homodimer. In terms of tissue distribution, widely expressed. Predominantly expressed in neuronal tissues. Brain, heart, kidney, liver and colon (at protein level).

It localises to the cell membrane. Its subcellular location is the early endosome. It carries out the reaction Mg(2+)(in) = Mg(2+)(out). In terms of biological role, acts as a Mg(2+) transporter. Can also transport other divalent cations such as Fe(2+), Sr(2+), Ba(2+), Zn(2+) and Co(2+) but to a much less extent than Mg(2+). The sequence is that of Magnesium transporter NIPA1 (Nipa1) from Mus musculus (Mouse).